Here is a 157-residue protein sequence, read N- to C-terminus: Ribonuclease H (157 aa).

Residues 3 to 144 (ELKQLYIFTD…CDVLARKAAE (142 aa)) enclose the RNase H type-1 domain. Mg(2+)-binding residues include Asp-12, Glu-50, Asp-72, and Asp-136.

This sequence belongs to the RNase H family. Monomer. It depends on Mg(2+) as a cofactor.

The protein localises to the cytoplasm. The enzyme catalyses Endonucleolytic cleavage to 5'-phosphomonoester.. Functionally, endonuclease that specifically degrades the RNA of RNA-DNA hybrids. The chain is Ribonuclease H from Shewanella frigidimarina (strain NCIMB 400).